A 254-amino-acid polypeptide reads, in one-letter code: Small ribosomal subunit protein uS2 (254 aa).

The interval 225-254 (ALSERKREKDDAKLKEDEESKKASDKAEIQ) is disordered. The segment covering 226-254 (LSERKREKDDAKLKEDEESKKASDKAEIQ) has biased composition (basic and acidic residues).

The protein belongs to the universal ribosomal protein uS2 family.

This is Small ribosomal subunit protein uS2 from Cytophaga hutchinsonii (strain ATCC 33406 / DSM 1761 / CIP 103989 / NBRC 15051 / NCIMB 9469 / D465).